The following is a 581-amino-acid chain: Proline--tRNA ligase (581 aa).

This sequence belongs to the class-II aminoacyl-tRNA synthetase family. ProS type 1 subfamily. As to quaternary structure, homodimer.

It localises to the cytoplasm. The enzyme catalyses tRNA(Pro) + L-proline + ATP = L-prolyl-tRNA(Pro) + AMP + diphosphate. In terms of biological role, catalyzes the attachment of proline to tRNA(Pro) in a two-step reaction: proline is first activated by ATP to form Pro-AMP and then transferred to the acceptor end of tRNA(Pro). As ProRS can inadvertently accommodate and process non-cognate amino acids such as alanine and cysteine, to avoid such errors it has two additional distinct editing activities against alanine. One activity is designated as 'pretransfer' editing and involves the tRNA(Pro)-independent hydrolysis of activated Ala-AMP. The other activity is designated 'posttransfer' editing and involves deacylation of mischarged Ala-tRNA(Pro). The misacylated Cys-tRNA(Pro) is not edited by ProRS. This is Proline--tRNA ligase from Delftia acidovorans (strain DSM 14801 / SPH-1).